Consider the following 163-residue polypeptide: Pheromone-binding protein 1 (163 aa).

Positions 1-21 (MLGKISLLLLPVFVAINLVHS) are cleaved as a signal peptide. 3 disulfides stabilise this stretch: cysteine 40-cysteine 75, cysteine 71-cysteine 129, and cysteine 118-cysteine 138.

This sequence belongs to the PBP/GOBP family. As to expression, antenna.

Functionally, this major soluble protein in olfactory sensilla of male moths might serve to solubilize the extremely hydrophobic pheromone molecules and to transport pheromone through the aqueous lymph to receptors located on olfactory cilia. The polypeptide is Pheromone-binding protein 1 (Antheraea pernyi (Chinese oak silk moth)).